A 149-amino-acid polypeptide reads, in one-letter code: UPAR/Ly6 domain-containing protein bou (149 aa).

The first 31 residues, 1–31 (MWPPKHAHIGWLSSLALVVLLMSLQMVMVSG), serve as a signal peptide directing secretion. At 32–126 (IECYVCDTSD…YTCDTDGCNA (95 aa)) the chain is on the extracellular side. Intrachain disulfides connect C34-C74, C37-C48, C65-C91, C100-C115, and C119-C124. N64 carries N-linked (GlcNAc...) asparagine glycosylation. N125 carries the GPI-anchor amidated asparagine lipid modification. The propeptide at 126 to 149 (AAGRLELEWGVAAALLTLTWLLRH) is removed in mature form. A helical transmembrane segment spans residues 127–147 (AGRLELEWGVAAALLTLTWLL). Over 148 to 149 (RH) the chain is Cytoplasmic.

In terms of processing, GPI-anchored.

Its subcellular location is the cell membrane. The protein resides in the cell junction. It is found in the septate junction. It localises to the cytoplasm. The protein localises to the cell cortex. Its subcellular location is the secreted. The protein resides in the apicolateral cell membrane. In terms of biological role, involved in tracheal paracellular barrier functions mediated by epithelial cell septate junctions. Involved in paracellular barrier functions mediated by glial cell septate junctions in the peripheral nervous system, including the chordotonal organs, but not the hemolymph-brain barrier (the insect blood-brain barrier) of the central nervous system. Required for septate junction assembly, possibly by organizing the preassembly and transport of septate junction proteins such as dlg1/disks large 1, Nrx-IV/Neurexin-IV and the claudin protein kune. Involved in chitin fiber organization during tracheal development. Secreted, possibly in association with extracellular vesicles, to act non-autonomously on tissues distant from its site of expression. The protein is UPAR/Ly6 domain-containing protein bou of Drosophila melanogaster (Fruit fly).